A 60-amino-acid chain; its full sequence is Large ribosomal subunit protein uL30 (60 aa).

Belongs to the universal ribosomal protein uL30 family. Part of the 50S ribosomal subunit.

The sequence is that of Large ribosomal subunit protein uL30 from Azoarcus sp. (strain BH72).